The sequence spans 269 residues: Achromobactin transport ATP-binding protein CbrD (269 aa).

An ABC transporter domain is found at 4 to 240 (ITSRELTLGY…ALVKTVFNLD (237 aa)). Residue 36–43 (GSNGCGKS) participates in ATP binding.

Belongs to the ABC transporter superfamily.

It localises to the cell inner membrane. Part of the binding-protein-dependent transport system CbrABCD for uptake of the siderophore achromobactin. Probably responsible for energy coupling to the transport system. The sequence is that of Achromobactin transport ATP-binding protein CbrD (cbrD) from Dickeya dadantii (strain 3937) (Erwinia chrysanthemi (strain 3937)).